The chain runs to 326 residues: Holliday junction branch migration complex subunit RuvB (326 aa).

Residues 1-180 (MKSISCGKEY…FGIPLHLEFY (180 aa)) form a large ATPase domain (RuvB-L) region. Residues isoleucine 19, arginine 20, glycine 61, lysine 64, threonine 65, threonine 66, 127–129 (EDF), arginine 170, tyrosine 180, and arginine 217 each bind ATP. Residue threonine 65 coordinates Mg(2+). Positions 181 to 251 (SFEELVNIIK…VADSVLLKLG (71 aa)) are small ATPAse domain (RuvB-S). A head domain (RuvB-H) region spans residues 254–326 (KMGLNKLDMN…QAKEYLSFQH (73 aa)). Arginine 307 and arginine 312 together coordinate DNA.

This sequence belongs to the RuvB family. In terms of assembly, homohexamer. Forms an RuvA(8)-RuvB(12)-Holliday junction (HJ) complex. HJ DNA is sandwiched between 2 RuvA tetramers; dsDNA enters through RuvA and exits via RuvB. An RuvB hexamer assembles on each DNA strand where it exits the tetramer. Each RuvB hexamer is contacted by two RuvA subunits (via domain III) on 2 adjacent RuvB subunits; this complex drives branch migration. In the full resolvosome a probable DNA-RuvA(4)-RuvB(12)-RuvC(2) complex forms which resolves the HJ.

Its subcellular location is the cytoplasm. The enzyme catalyses ATP + H2O = ADP + phosphate + H(+). Functionally, the RuvA-RuvB-RuvC complex processes Holliday junction (HJ) DNA during genetic recombination and DNA repair, while the RuvA-RuvB complex plays an important role in the rescue of blocked DNA replication forks via replication fork reversal (RFR). RuvA specifically binds to HJ cruciform DNA, conferring on it an open structure. The RuvB hexamer acts as an ATP-dependent pump, pulling dsDNA into and through the RuvAB complex. RuvB forms 2 homohexamers on either side of HJ DNA bound by 1 or 2 RuvA tetramers; 4 subunits per hexamer contact DNA at a time. Coordinated motions by a converter formed by DNA-disengaged RuvB subunits stimulates ATP hydrolysis and nucleotide exchange. Immobilization of the converter enables RuvB to convert the ATP-contained energy into a lever motion, pulling 2 nucleotides of DNA out of the RuvA tetramer per ATP hydrolyzed, thus driving DNA branch migration. The RuvB motors rotate together with the DNA substrate, which together with the progressing nucleotide cycle form the mechanistic basis for DNA recombination by continuous HJ branch migration. Branch migration allows RuvC to scan DNA until it finds its consensus sequence, where it cleaves and resolves cruciform DNA. This is Holliday junction branch migration complex subunit RuvB from Wolbachia pipientis wMel.